The following is a 132-amino-acid chain: UPF0146 protein PF0123 (132 aa).

This sequence belongs to the UPF0146 family.

This chain is UPF0146 protein PF0123, found in Pyrococcus furiosus (strain ATCC 43587 / DSM 3638 / JCM 8422 / Vc1).